The following is a 493-amino-acid chain: Rop guanine nucleotide exchange factor 10 (493 aa).

2 disordered regions span residues 1–45 (MFDG…RSDM) and 400–423 (GEAE…VVAA). The segment covering 17–27 (DGMHTPEHELA) has biased composition (basic and acidic residues). The region spanning 35–401 (RRGKQNRRSD…RLVQRQLMGE (367 aa)) is the PRONE domain.

Its function is as follows. Guanine-nucleotide exchange factor (GEF) that acts as an activator of Rop (Rho of plants) GTPases by promoting the exchange of GDP for GTP. The sequence is that of Rop guanine nucleotide exchange factor 10 (ROPGEF10) from Arabidopsis thaliana (Mouse-ear cress).